Consider the following 87-residue polypeptide: UPF0250 protein Ent638_1166 (87 aa).

Belongs to the UPF0250 family.

The chain is UPF0250 protein Ent638_1166 from Enterobacter sp. (strain 638).